Reading from the N-terminus, the 418-residue chain is Tryptophan synthase beta chain (418 aa).

The span at 1-12 shows a compositional bias: polar residues; sequence MTSTLPTANTPD. The disordered stretch occupies residues 1–21; it reads MTSTLPTANTPDPASLMPSVR. The residue at position 111 (Lys111) is an N6-(pyridoxal phosphate)lysine.

This sequence belongs to the TrpB family. Tetramer of two alpha and two beta chains. It depends on pyridoxal 5'-phosphate as a cofactor.

The enzyme catalyses (1S,2R)-1-C-(indol-3-yl)glycerol 3-phosphate + L-serine = D-glyceraldehyde 3-phosphate + L-tryptophan + H2O. It functions in the pathway amino-acid biosynthesis; L-tryptophan biosynthesis; L-tryptophan from chorismate: step 5/5. In terms of biological role, the beta subunit is responsible for the synthesis of L-tryptophan from indole and L-serine. This chain is Tryptophan synthase beta chain, found in Synechococcus sp. (strain CC9311).